The sequence spans 243 residues: Adenosylcobinamide-GDP ribazoletransferase (243 aa).

7 helical membrane passes run 8–28 (WLGAIAFYTCLPISPRWPIQL), 36–56 (PWVGLVLGGMLWGVQWLLDFL), 58–78 (VPSPVASAVLVALWLALTGGL), 107–127 (AGAFGVMAAMVILLLKVTSLS), 131–151 (KGSVLVWVLVLGRLAQVWAIA), 187–207 (FLLPLPLGQLLFGLLLILLIP), and 222–242 (YGAVVEWTEALLLVAFTVGSA).

This sequence belongs to the CobS family. Mg(2+) is required as a cofactor.

It localises to the cell inner membrane. The enzyme catalyses alpha-ribazole + adenosylcob(III)inamide-GDP = adenosylcob(III)alamin + GMP + H(+). The catalysed reaction is alpha-ribazole 5'-phosphate + adenosylcob(III)inamide-GDP = adenosylcob(III)alamin 5'-phosphate + GMP + H(+). It functions in the pathway cofactor biosynthesis; adenosylcobalamin biosynthesis; adenosylcobalamin from cob(II)yrinate a,c-diamide: step 7/7. Joins adenosylcobinamide-GDP and alpha-ribazole to generate adenosylcobalamin (Ado-cobalamin). Also synthesizes adenosylcobalamin 5'-phosphate from adenosylcobinamide-GDP and alpha-ribazole 5'-phosphate. This is Adenosylcobinamide-GDP ribazoletransferase from Thermosynechococcus vestitus (strain NIES-2133 / IAM M-273 / BP-1).